Here is a 298-residue protein sequence, read N- to C-terminus: Lipoyl synthase (298 aa).

Residues Cys-40, Cys-45, Cys-51, Cys-67, Cys-71, Cys-74, and Ser-280 each contribute to the [4Fe-4S] cluster site. In terms of domain architecture, Radical SAM core spans 53–269 (AVRRTATFMI…KEIAMQKGFS (217 aa)).

Belongs to the radical SAM superfamily. Lipoyl synthase family. [4Fe-4S] cluster serves as cofactor.

The protein resides in the cytoplasm. It catalyses the reaction [[Fe-S] cluster scaffold protein carrying a second [4Fe-4S](2+) cluster] + N(6)-octanoyl-L-lysyl-[protein] + 2 oxidized [2Fe-2S]-[ferredoxin] + 2 S-adenosyl-L-methionine + 4 H(+) = [[Fe-S] cluster scaffold protein] + N(6)-[(R)-dihydrolipoyl]-L-lysyl-[protein] + 4 Fe(3+) + 2 hydrogen sulfide + 2 5'-deoxyadenosine + 2 L-methionine + 2 reduced [2Fe-2S]-[ferredoxin]. Its pathway is protein modification; protein lipoylation via endogenous pathway; protein N(6)-(lipoyl)lysine from octanoyl-[acyl-carrier-protein]. Its function is as follows. Catalyzes the radical-mediated insertion of two sulfur atoms into the C-6 and C-8 positions of the octanoyl moiety bound to the lipoyl domains of lipoate-dependent enzymes, thereby converting the octanoylated domains into lipoylated derivatives. This is Lipoyl synthase from Bacillus velezensis (strain DSM 23117 / BGSC 10A6 / LMG 26770 / FZB42) (Bacillus amyloliquefaciens subsp. plantarum).